The chain runs to 253 residues: Imidazole glycerol phosphate synthase subunit HisF (253 aa).

Residues D13 and D132 contribute to the active site.

This sequence belongs to the HisA/HisF family. Heterodimer of HisH and HisF.

Its subcellular location is the cytoplasm. The catalysed reaction is 5-[(5-phospho-1-deoxy-D-ribulos-1-ylimino)methylamino]-1-(5-phospho-beta-D-ribosyl)imidazole-4-carboxamide + L-glutamine = D-erythro-1-(imidazol-4-yl)glycerol 3-phosphate + 5-amino-1-(5-phospho-beta-D-ribosyl)imidazole-4-carboxamide + L-glutamate + H(+). It functions in the pathway amino-acid biosynthesis; L-histidine biosynthesis; L-histidine from 5-phospho-alpha-D-ribose 1-diphosphate: step 5/9. In terms of biological role, IGPS catalyzes the conversion of PRFAR and glutamine to IGP, AICAR and glutamate. The HisF subunit catalyzes the cyclization activity that produces IGP and AICAR from PRFAR using the ammonia provided by the HisH subunit. This Aliarcobacter butzleri (strain RM4018) (Arcobacter butzleri) protein is Imidazole glycerol phosphate synthase subunit HisF.